Here is a 168-residue protein sequence, read N- to C-terminus: Mediator of RNA polymerase II transcription subunit 7a (168 aa).

2 coiled-coil regions span residues 64–92 (KDSN…ADVL) and 132–166 (IMEL…LTLD).

It belongs to the Mediator complex subunit 7 family. As to quaternary structure, component of the Mediator complex. Interacts with MEE14/CBP1.

It is found in the nucleus. Component of the Mediator complex, a coactivator involved in the regulated transcription of nearly all RNA polymerase II-dependent genes. Mediator functions as a bridge to convey information from gene-specific regulatory proteins to the basal RNA polymerase II transcription machinery. The Mediator complex, having a compact conformation in its free form, is recruited to promoters by direct interactions with regulatory proteins and serves for the assembly of a functional pre-initiation complex with RNA polymerase II and the general transcription factors. The polypeptide is Mediator of RNA polymerase II transcription subunit 7a (MED7A) (Arabidopsis thaliana (Mouse-ear cress)).